The primary structure comprises 896 residues: Lipoxygenase 2, chloroplastic (896 aa).

A chloroplast-targeting transit peptide spans 1–56; sequence MYCRESLSSLQTLNVAKSLSSLFPKQSALINPISAGRRNNLPRPNLRRRCKVTASR. Positions 79–199 constitute a PLAT domain; it reads ITAQEEFLEG…VDPTKRIFFS (121 aa). Residues 175-232 are EIF4E2 binding; sequence GSITFTCESWVAPKSVDPTKRIFFSDKSYLPSQTPEPLKKYRKEELETLQGKNREEVG. Positions 202-896 constitute a Lipoxygenase domain; it reads SYLPSQTPEP…GMGVPYSISI (695 aa). His-554, His-559, His-746, Asn-750, and Ile-896 together coordinate Fe cation.

This sequence belongs to the lipoxygenase family. As to quaternary structure, interacts with EIF4E2. Requires Fe cation as cofactor. As to expression, in leaves and inflorescences but not abundant in seeds, roots and stems.

The protein resides in the plastid. It is found in the chloroplast. The protein localises to the cytoplasm. The enzyme catalyses (9Z,12Z)-octadecadienoate + O2 = (13S)-hydroperoxy-(9Z,11E)-octadecadienoate. It catalyses the reaction (9Z,12Z,15Z)-octadecatrienoate + O2 = (13S)-hydroperoxy-(9Z,11E,15Z)-octadecatrienoate. It functions in the pathway lipid metabolism; oxylipin biosynthesis. 13S-lipoxygenase that can use linolenic acid as substrates. Plant lipoxygenases may be involved in a number of diverse aspects of plant physiology including growth and development, pest resistance, and senescence or responses to wounding. Catalyzes the hydroperoxidation of lipids containing a cis,cis-1,4-pentadiene structure. Required for the wound-induced synthesis of jasmonic acid (JA) in leaves. This chain is Lipoxygenase 2, chloroplastic (LOX2), found in Arabidopsis thaliana (Mouse-ear cress).